The primary structure comprises 178 residues: Fatty-acid and retinol-binding protein 1 (178 aa).

The signal sequence occupies residues 1-16 (MYHRLILLALVGTTMA). Coiled coils occupy residues 67 to 89 (DAALEALKDKSDKLYKNAVELRN) and 130 to 153 (KQAARDIIAKYQALSEETKEELKV).

It belongs to the fatty-acid and retinol-binding protein (FARBP) family. Not glycosylated.

The protein resides in the secreted. Binds retinol. Also binds the fluorescent fatty acid 11-((5-dimethylaminonaphthalene-1-sulfonyl)amino)undecanoic acid (DAUDA). The long chain fatty acid oleic acid can act competitively to displace bound DAUDA and retinol. The polypeptide is Fatty-acid and retinol-binding protein 1 (Brugia malayi (Filarial nematode worm)).